Consider the following 360-residue polypeptide: Archaemetzincin-2 (360 aa).

His-254 contributes to the Zn(2+) binding site. Glu-255 (proton acceptor) is an active-site residue. Positions 258, 264, 265, 270, 289, and 292 each coordinate Zn(2+).

Belongs to the peptidase M54 family. The cofactor is Zn(2+).

In terms of biological role, probable zinc metalloprotease. The protein is Archaemetzincin-2 (AMZ2) of Macaca fascicularis (Crab-eating macaque).